The following is a 265-amino-acid chain: Interleukin-2 receptor subunit alpha (265 aa).

Residues 1–21 (MDSYLLMWGLLTLIMVPGCFA) form the signal peptide. Positions 22–84 (ELCDDDPPEI…SWDNQCQCTS (63 aa)) constitute a Sushi 1 domain. The Extracellular segment spans residues 22 to 240 (ELCDDDPPEI…ETFIFTTEYQ (219 aa)). 3 disulfides stabilise this stretch: Cys24–Cys67, Cys49–Cys80, and Cys51–Cys82. N-linked (GlcNAc...) asparagine glycosylation is found at Asn70 and Asn89. Positions 87–98 (TRNTTKQVTPQP) are enriched in polar residues. Positions 87-123 (TRNTTKQVTPQPEEQKERKTTEMQSPMQPVDQASLPG) are disordered. A Sushi 2 domain is found at 123 to 186 (GHCREPPPWE…WTQPQLICTG (64 aa)). Cystine bridges form between Cys125-Cys168 and Cys152-Cys184. The tract at residues 190–210 (TSQFPGEEKPQASPEGRPESE) is disordered. The span at 195–209 (GEEKPQASPEGRPES) shows a compositional bias: basic and acidic residues. The chain crosses the membrane as a helical span at residues 241 to 259 (VAVAGCVFLLISVLLLSGL). Topologically, residues 260–265 (TWQRRQ) are cytoplasmic.

Non-covalent dimer of an alpha and a beta subunit. IL2R exists in 3 different forms: a high affinity dimer, an intermediate affinity monomer (beta subunit), and a low affinity monomer (alpha subunit). The high and intermediate affinity forms also associate with a gamma subunit.

Its subcellular location is the membrane. Receptor for interleukin-2. The receptor is involved in the regulation of immune tolerance by controlling regulatory T cells (TREGs) activity. TREGs suppress the activation and expansion of autoreactive T-cells. The chain is Interleukin-2 receptor subunit alpha (IL2RA) from Pan troglodytes (Chimpanzee).